The following is a 692-amino-acid chain: Elongation factor G (692 aa).

Residues 8 to 282 (EKVRNIGIAA…AVVDYLPAPT (275 aa)) enclose the tr-type G domain. GTP is bound by residues 17–24 (AHIDAGKT), 81–85 (DTPGH), and 135–138 (NKMD).

Belongs to the TRAFAC class translation factor GTPase superfamily. Classic translation factor GTPase family. EF-G/EF-2 subfamily.

The protein localises to the cytoplasm. Its function is as follows. Catalyzes the GTP-dependent ribosomal translocation step during translation elongation. During this step, the ribosome changes from the pre-translocational (PRE) to the post-translocational (POST) state as the newly formed A-site-bound peptidyl-tRNA and P-site-bound deacylated tRNA move to the P and E sites, respectively. Catalyzes the coordinated movement of the two tRNA molecules, the mRNA and conformational changes in the ribosome. This is Elongation factor G from Trichormus variabilis (strain ATCC 29413 / PCC 7937) (Anabaena variabilis).